The primary structure comprises 156 residues: UPF0251 protein Sfum_2819 (156 aa).

Belongs to the UPF0251 family.

The polypeptide is UPF0251 protein Sfum_2819 (Syntrophobacter fumaroxidans (strain DSM 10017 / MPOB)).